A 630-amino-acid chain; its full sequence is CREB-regulated transcription coactivator 1 (630 aa).

Residues Ser-64 and Ser-113 each carry the phosphoserine modification. Disordered stretches follow at residues 142 to 174 (ADTS…GPQD), 187 to 221 (GMEE…VPGI), 256 to 331 (SPLP…LSPL), and 356 to 475 (QAGS…HTST). Position 149 is a phosphothreonine (Thr-149). At Ser-151 the chain carries Phosphoserine; by SIK1 and SIK2. Residues 151–167 (SDSALHQSTMTPTQAES) show a composition bias toward polar residues. Residue Thr-161 is modified to Phosphothreonine. Basic and acidic residues predominate over residues 194-208 (ETDKTLSKQSWDSKK). The Nuclear export signal motif lies at 242–258 (TGGSLPDLSTIHFPSPL). Pro residues predominate over residues 256–270 (SPLPTPLDPEEPPFP). 2 stretches are compositionally biased toward polar residues: residues 292-301 (GMNTPSSSPQ) and 310-331 (LSLS…LSPL). The span at 361–384 (QPPPQPQPPPPPPPVSQQQPPPPQ) shows a compositional bias: pro residues. The segment covering 385–394 (VSVGLPQGGP) has biased composition (low complexity). Polar residues-rich tracts occupy residues 414–426 (VPST…TESP) and 450–475 (PATQ…HTST).

This sequence belongs to the TORC family. As to quaternary structure, binds, as a tetramer, through its N-terminal region, with the bZIP domain of CREB1. 'Arg-314' in the bZIP domain of CREB1 is essential for this interaction. Interaction, via its C-terminal, with TAF4, enhances recruitment of TAF4 to CREB1. Interacts with 14-3-3 proteins, including YWHAE/14-3-3 epsilon. Interacts with calmodulin-dependent catalytic subunit PPP3CA/calcineurin A. Post-translationally, phosphorylation/dephosphorylation states of Ser-151 are required for regulating transduction of CREB activity. TORCs are inactive when phosphorylated, and active when dephosphorylated at this site. This primary site of phosphorylation is mediated by SIKs (SIK1 and SIK2), is regulated by cAMP and calcium levels and is dependent on the phosphorylation of SIKs by LKB1. In terms of tissue distribution, highly expressed in developing cortical neurons, peaking during dendrite development.

Its subcellular location is the cytoplasm. It is found in the nucleus. Transcriptional coactivator for CREB1 which activates transcription through both consensus and variant cAMP response element (CRE) sites. Acts as a coactivator, in the SIK/TORC signaling pathway, being active when dephosphorylated and acts independently of CREB1 'Ser-133' phosphorylation. Enhances the interaction of CREB1 with TAF4. Regulates the expression of specific CREB-activated genes such as the steroidogenic gene, StAR. Potent coactivator of PGC1alpha and inducer of mitochondrial biogenesis in muscle cells. In the hippocampus, involved in late-phase long-term potentiation (L-LTP) maintenance at the Schaffer collateral-CA1 synapses. May be required for dendritic growth of developing cortical neurons. In concert with SIK1, regulates the light-induced entrainment of the circadian clock. In response to light stimulus, coactivates the CREB-mediated transcription of PER1 which plays an important role in the photic entrainment of the circadian clock. This is CREB-regulated transcription coactivator 1 (Crtc1) from Rattus norvegicus (Rat).